The following is a 179-amino-acid chain: ATP synthase subunit b (179 aa).

A helical membrane pass occupies residues 27 to 47 (TAITFLVMLVVLGKFAWGPIV).

Belongs to the ATPase B chain family. As to quaternary structure, F-type ATPases have 2 components, F(1) - the catalytic core - and F(0) - the membrane proton channel. F(1) has five subunits: alpha(3), beta(3), gamma(1), delta(1), epsilon(1). F(0) has three main subunits: a(1), b(2) and c(10-14). The alpha and beta chains form an alternating ring which encloses part of the gamma chain. F(1) is attached to F(0) by a central stalk formed by the gamma and epsilon chains, while a peripheral stalk is formed by the delta and b chains.

It localises to the cell inner membrane. Its function is as follows. F(1)F(0) ATP synthase produces ATP from ADP in the presence of a proton or sodium gradient. F-type ATPases consist of two structural domains, F(1) containing the extramembraneous catalytic core and F(0) containing the membrane proton channel, linked together by a central stalk and a peripheral stalk. During catalysis, ATP synthesis in the catalytic domain of F(1) is coupled via a rotary mechanism of the central stalk subunits to proton translocation. Functionally, component of the F(0) channel, it forms part of the peripheral stalk, linking F(1) to F(0). This chain is ATP synthase subunit b, found in Anaeromyxobacter sp. (strain K).